A 295-amino-acid polypeptide reads, in one-letter code: GDSLYGSHSPTVTSQLGSLCMAPALLMASYQPGVKIEERPLNRMQQTGVKPSLGEDKPKVPGILPFSVEALMADRKPGRDRDLSSPTGSPLAGTSHSPRVGSIAAGETPNSPISLGNRYPVGAIMQLPEETLLKPESPERSSWIQSPSFSPSPTRRMSPPACPLRKHKTNRKPRTPFTTSQLLALERKFRQKQYLSIAERAEFSSSLNLTETQVKIWFQNRRAKAKRLQEAELEKLKMAAKPMLPPAFGISFPLGTPVPTASLYGTSNPFQRQALPMSPMGLYTAHLGYSMYHLS.

Disordered stretches follow at residues 75–115 (RKPG…PISL) and 134–175 (KPES…KPRT). The segment covering 84 to 97 (SSPTGSPLAGTSHS) has biased composition (polar residues). Residues 141 to 153 (SSWIQSPSFSPSP) show a composition bias toward low complexity. Residues 164–174 (LRKHKTNRKPR) show a composition bias toward basic residues. Positions 170–229 (NRKPRTPFTTSQLLALERKFRQKQYLSIAERAEFSSSLNLTETQVKIWFQNRRAKAKRLQ) form a DNA-binding region, homeobox.

This sequence belongs to the Msh homeobox family.

The protein resides in the nucleus. The protein is Homeobox protein XHOX-7.1 of Xenopus laevis (African clawed frog).